The following is a 300-amino-acid chain: Probable low-salt glycan biosynthesis reductase Agl14 (300 aa).

NADH-binding positions include 10-12 (GLL), 46-47 (DI), and 70-72 (AYT). NADPH contacts are provided by residues 11 to 12 (LL), 46 to 47 (DI), 70 to 72 (AYT), Tyr-109, Tyr-135, and Lys-139. 2 residues coordinate NADH: Tyr-135 and Lys-139. The active-site Proton donor/acceptor is the Tyr-135.

Belongs to the dTDP-4-dehydrorhamnose reductase family.

It functions in the pathway protein modification; protein glycosylation. Its pathway is cell surface structure biogenesis; S-layer biogenesis. Its function is as follows. Reductase involved in N-glycan biosynthetic pathway that takes place under low-salt conditions (1.75 M instead of 3.4 M). Participates in the formation of the tetrasaccharide present at 'Asn-532' of S-layer glycoprotein Csg, consisting of a sulfated hexose, 2 hexoses and rhamnose. Involved in the addition of final rhamnose (sugar 4) of the tetrasaccharide on the dolichol phosphate carrier. This Haloferax volcanii (strain ATCC 29605 / DSM 3757 / JCM 8879 / NBRC 14742 / NCIMB 2012 / VKM B-1768 / DS2) (Halobacterium volcanii) protein is Probable low-salt glycan biosynthesis reductase Agl14 (agl14).